Here is a 286-residue protein sequence, read N- to C-terminus: Polyamine aminopropyltransferase (286 aa).

The PABS domain maps to M1–T235. Q30 provides a ligand contact to S-methyl-5'-thioadenosine. The spermidine site is built by H61 and D85. Residues E105 and D137–G138 each bind S-methyl-5'-thioadenosine. The active-site Proton acceptor is D155. D155–D158 contributes to the spermidine binding site. P162 contacts S-methyl-5'-thioadenosine.

The protein belongs to the spermidine/spermine synthase family. As to quaternary structure, homodimer or homotetramer.

Its subcellular location is the cytoplasm. It catalyses the reaction S-adenosyl 3-(methylsulfanyl)propylamine + putrescine = S-methyl-5'-thioadenosine + spermidine + H(+). It functions in the pathway amine and polyamine biosynthesis; spermidine biosynthesis; spermidine from putrescine: step 1/1. Catalyzes the irreversible transfer of a propylamine group from the amino donor S-adenosylmethioninamine (decarboxy-AdoMet) to putrescine (1,4-diaminobutane) to yield spermidine. The sequence is that of Polyamine aminopropyltransferase from Pseudomonas syringae pv. tomato (strain ATCC BAA-871 / DC3000).